We begin with the raw amino-acid sequence, 90 residues long: Acylphosphatase (90 aa).

The region spanning His3–Gly90 is the Acylphosphatase-like domain. Residues Arg18 and Asn36 contribute to the active site.

The protein belongs to the acylphosphatase family.

It catalyses the reaction an acyl phosphate + H2O = a carboxylate + phosphate + H(+). In Bacillus pumilus (strain SAFR-032), this protein is Acylphosphatase (acyP).